The sequence spans 328 residues: Cytosolic Fe-S cluster assembly factor NBP35 (328 aa).

[4Fe-4S] cluster contacts are provided by cysteine 27, cysteine 41, cysteine 44, and cysteine 50. Position 80-87 (80-87 (GKGGVGKS)) interacts with ATP. 2 residues coordinate [4Fe-4S] cluster: cysteine 253 and cysteine 256.

It belongs to the Mrp/NBP35 ATP-binding proteins family. NUBP1/NBP35 subfamily. Heterotetramer of 2 NBP35 and 2 CFD1 chains. Requires [4Fe-4S] cluster as cofactor.

The protein localises to the cytoplasm. It localises to the nucleus. Component of the cytosolic iron-sulfur (Fe/S) protein assembly (CIA) machinery. Required for maturation of extramitochondrial Fe-S proteins. The NBP35-CFD1 heterotetramer forms a Fe-S scaffold complex, mediating the de novo assembly of an Fe-S cluster and its transfer to target apoproteins. Required for biogenesis and export of both ribosomal subunits, which may reflect a role in assembly of the Fe/S clusters in RLI1, a protein which performs rRNA processing and ribosome export. The polypeptide is Cytosolic Fe-S cluster assembly factor NBP35 (Saccharomyces cerevisiae (strain ATCC 204508 / S288c) (Baker's yeast)).